Consider the following 247-residue polypeptide: MSWRPTHSVRNAPYSMRDNYAQGVDVYYKKVGGTYRNLHFRGLRLLLLQCLSHFWDHDEKFKSHGLHVIDLACGSGEVSETVIEWEHLGRELGIHGGAFKVRKEISIRSIPPELPPFELIATDPFTLEAYTNRIGKPCLTLNFQDIADEKLPPSSAEDGIYDLVICSFALHLLTEPSKLFSTCYALSVQCRWLLVLGPHKKPELKPEWGWDAWNIDTWCPLGYGISHDYVLERVHARFFKSRNLIDG.

This is an uncharacterized protein from Schizosaccharomyces pombe (strain 972 / ATCC 24843) (Fission yeast).